A 254-amino-acid chain; its full sequence is Type III pantothenate kinase (254 aa).

Residue 6-13 (DVGNTNIV) coordinates ATP. 107–110 (GADR) provides a ligand contact to substrate. Asp-109 (proton acceptor) is an active-site residue. Asp-129 contributes to the K(+) binding site. Thr-132 contacts ATP. Thr-184 contacts substrate.

The protein belongs to the type III pantothenate kinase family. In terms of assembly, homodimer. NH4(+) is required as a cofactor. Requires K(+) as cofactor.

The protein localises to the cytoplasm. The catalysed reaction is (R)-pantothenate + ATP = (R)-4'-phosphopantothenate + ADP + H(+). It participates in cofactor biosynthesis; coenzyme A biosynthesis; CoA from (R)-pantothenate: step 1/5. Its function is as follows. Catalyzes the phosphorylation of pantothenate (Pan), the first step in CoA biosynthesis. The polypeptide is Type III pantothenate kinase (Exiguobacterium sp. (strain ATCC BAA-1283 / AT1b)).